We begin with the raw amino-acid sequence, 249 residues long: Probable transcriptional regulatory protein Sfum_0996 (249 aa).

Belongs to the TACO1 family.

The protein resides in the cytoplasm. The polypeptide is Probable transcriptional regulatory protein Sfum_0996 (Syntrophobacter fumaroxidans (strain DSM 10017 / MPOB)).